A 323-amino-acid chain; its full sequence is tRNA U34 carboxymethyltransferase (323 aa).

Carboxy-S-adenosyl-L-methionine contacts are provided by residues Lys91, Trp105, Lys110, Gly130, 180 to 181 (IE), Met196, Tyr200, and Arg315.

This sequence belongs to the class I-like SAM-binding methyltransferase superfamily. CmoB family. As to quaternary structure, homotetramer.

It catalyses the reaction carboxy-S-adenosyl-L-methionine + 5-hydroxyuridine(34) in tRNA = 5-carboxymethoxyuridine(34) in tRNA + S-adenosyl-L-homocysteine + H(+). Functionally, catalyzes carboxymethyl transfer from carboxy-S-adenosyl-L-methionine (Cx-SAM) to 5-hydroxyuridine (ho5U) to form 5-carboxymethoxyuridine (cmo5U) at position 34 in tRNAs. This Citrifermentans bemidjiense (strain ATCC BAA-1014 / DSM 16622 / JCM 12645 / Bem) (Geobacter bemidjiensis) protein is tRNA U34 carboxymethyltransferase.